The chain runs to 398 residues: tRNA-specific 2-thiouridylase MnmA (398 aa).

Residues 18–25 (AMSGGVDS) and L44 contribute to the ATP site. The Nucleophile role is filled by C112. A disulfide bridge links C112 with C213. G136 contributes to the ATP binding site. Residues 163–165 (RDQ) are interaction with tRNA. Catalysis depends on C213, which acts as the Cysteine persulfide intermediate.

Belongs to the MnmA/TRMU family.

It is found in the cytoplasm. The catalysed reaction is S-sulfanyl-L-cysteinyl-[protein] + uridine(34) in tRNA + AH2 + ATP = 2-thiouridine(34) in tRNA + L-cysteinyl-[protein] + A + AMP + diphosphate + H(+). Catalyzes the 2-thiolation of uridine at the wobble position (U34) of tRNA, leading to the formation of s(2)U34. The polypeptide is tRNA-specific 2-thiouridylase MnmA (Agrobacterium fabrum (strain C58 / ATCC 33970) (Agrobacterium tumefaciens (strain C58))).